We begin with the raw amino-acid sequence, 212 residues long: Thiamine-phosphate synthase (212 aa).

4-amino-2-methyl-5-(diphosphooxymethyl)pyrimidine contacts are provided by residues Q39–K43 and N71. Residues D72 and D91 each contribute to the Mg(2+) site. Residue S110 coordinates 4-amino-2-methyl-5-(diphosphooxymethyl)pyrimidine. Position 136 to 138 (T136 to T138) interacts with 2-[(2R,5Z)-2-carboxy-4-methylthiazol-5(2H)-ylidene]ethyl phosphate. 4-amino-2-methyl-5-(diphosphooxymethyl)pyrimidine is bound at residue K139. 2-[(2R,5Z)-2-carboxy-4-methylthiazol-5(2H)-ylidene]ethyl phosphate contacts are provided by residues G168 and V188–S189.

The protein belongs to the thiamine-phosphate synthase family. Requires Mg(2+) as cofactor.

It catalyses the reaction 2-[(2R,5Z)-2-carboxy-4-methylthiazol-5(2H)-ylidene]ethyl phosphate + 4-amino-2-methyl-5-(diphosphooxymethyl)pyrimidine + 2 H(+) = thiamine phosphate + CO2 + diphosphate. It carries out the reaction 2-(2-carboxy-4-methylthiazol-5-yl)ethyl phosphate + 4-amino-2-methyl-5-(diphosphooxymethyl)pyrimidine + 2 H(+) = thiamine phosphate + CO2 + diphosphate. The catalysed reaction is 4-methyl-5-(2-phosphooxyethyl)-thiazole + 4-amino-2-methyl-5-(diphosphooxymethyl)pyrimidine + H(+) = thiamine phosphate + diphosphate. It participates in cofactor biosynthesis; thiamine diphosphate biosynthesis; thiamine phosphate from 4-amino-2-methyl-5-diphosphomethylpyrimidine and 4-methyl-5-(2-phosphoethyl)-thiazole: step 1/1. Condenses 4-methyl-5-(beta-hydroxyethyl)thiazole monophosphate (THZ-P) and 2-methyl-4-amino-5-hydroxymethyl pyrimidine pyrophosphate (HMP-PP) to form thiamine monophosphate (TMP). This Serratia proteamaculans (strain 568) protein is Thiamine-phosphate synthase.